The following is a 72-amino-acid chain: Large ribosomal subunit protein uL29 (72 aa).

It belongs to the universal ribosomal protein uL29 family.

This is Large ribosomal subunit protein uL29 from Microcystis aeruginosa (strain NIES-843 / IAM M-2473).